The chain runs to 443 residues: ATP-dependent protease ATPase subunit HslU (443 aa).

Residues isoleucine 18, 60–65 (GVGKTE), aspartate 256, glutamate 321, and arginine 393 each bind ATP.

The protein belongs to the ClpX chaperone family. HslU subfamily. In terms of assembly, a double ring-shaped homohexamer of HslV is capped on each side by a ring-shaped HslU homohexamer. The assembly of the HslU/HslV complex is dependent on binding of ATP.

It localises to the cytoplasm. In terms of biological role, ATPase subunit of a proteasome-like degradation complex; this subunit has chaperone activity. The binding of ATP and its subsequent hydrolysis by HslU are essential for unfolding of protein substrates subsequently hydrolyzed by HslV. HslU recognizes the N-terminal part of its protein substrates and unfolds these before they are guided to HslV for hydrolysis. The protein is ATP-dependent protease ATPase subunit HslU of Pasteurella multocida (strain Pm70).